A 92-amino-acid polypeptide reads, in one-letter code: Small ribosomal subunit protein uS19 (92 aa).

Belongs to the universal ribosomal protein uS19 family.

Functionally, protein S19 forms a complex with S13 that binds strongly to the 16S ribosomal RNA. In Rhizobium johnstonii (strain DSM 114642 / LMG 32736 / 3841) (Rhizobium leguminosarum bv. viciae), this protein is Small ribosomal subunit protein uS19.